Reading from the N-terminus, the 404-residue chain is Alkane 1-monooxygenase 1 (404 aa).

Transmembrane regions (helical) follow at residues 25-45, 47-67, 94-114, and 119-139; these read HLWI…YLVS, TGWS…VPLI, VLTY…AWWV, and IGVF…GLAL. Fe cation contacts are provided by H143 and H147. Residues 151–171 form a helical membrane-spanning segment; sequence TFDRWMAKLVLAVVGYGHFFI. Residues H173, H177, and H178 each coordinate Fe cation. The chain crosses the membrane as a helical span at residues 241 to 261; sequence VVLYAALLAFFGPLMLIFLPI. H317, H320, and H321 together coordinate Fe cation.

The protein belongs to the fatty acid desaturase type 1 family. AlkB subfamily. The cofactor is Fe(3+).

It is found in the cell inner membrane. It catalyses the reaction octane + 2 reduced [rubredoxin] + O2 + 2 H(+) = 2 oxidized [rubredoxin] + octan-1-ol + H2O. It functions in the pathway hydrocarbon metabolism; alkane degradation. In terms of biological role, catalyzes the hydroxylation of n-alkanes and fatty acids in the presence of a NADH-rubredoxin reductase and rubredoxin. It preferably hydroxylases C5-C12 hydrocarbons. The chain is Alkane 1-monooxygenase 1 (alkB1) from Alcanivorax borkumensis (strain ATCC 700651 / DSM 11573 / NCIMB 13689 / SK2).